The following is a 61-amino-acid chain: Putative antitoxin RelB2 (61 aa).

Functionally, antitoxin component of a type II toxin-antitoxin (TA) system. Its cognate toxin is RelE2 (Potential). This is Putative antitoxin RelB2 (relB2) from Methanocaldococcus jannaschii (strain ATCC 43067 / DSM 2661 / JAL-1 / JCM 10045 / NBRC 100440) (Methanococcus jannaschii).